The primary structure comprises 2723 residues: Zinc finger protein 292 (2723 aa).

A C2H2-type 1 zinc finger spans residues 569–591; it reads YSCPICAKNFNSKETFVPHVTLH. Residues 608–633 form a disordered region; sequence RLGRPPKITTTNENQKTNTVAKQEQR. Over residues 615–629 the composition is skewed to polar residues; sequence ITTTNENQKTNTVAK. Ser-654 bears the Phosphoserine mark. 5 consecutive C2H2-type zinc fingers follow at residues 681-705, 722-744, 750-774, 779-803, and 807-831; these read FNCPVTFCKKGFKYFKNLIAHVKGH, VICQYCRRHFVSVTHLNDHLQMH, YICIQMKCKAGFNSYAELLTHRKEH, AKCMFPKCGRIFSEAYLLYDHEAQH, and YTCKFTGCGKVYRSQGELEKHLDDH. Over residues 825–834 the composition is skewed to basic and acidic residues; the sequence is EKHLDDHSTP. The disordered stretch occupies residues 825–860; that stretch reads EKHLDDHSTPPEKVLPPEAQLNSSGDSIQPSEVNQN. Polar residues predominate over residues 844–860; the sequence is QLNSSGDSIQPSEVNQN. A C2H2-type 7 zinc finger spans residues 1098–1123; sequence FSCQVEGCTRTYNSSQSIGKHMKTAH. Lys-1117 is subject to N6-acetyllysine. Ser-1159 bears the Phosphoserine mark. The tract at residues 1331 to 1364 is disordered; it reads SSTNAQQSAPEKVKKDRGRGPNGKERKPKHNKRA. Residues 1341–1355 show a composition bias toward basic and acidic residues; that stretch reads EKVKKDRGRGPNGKE. Residues 1375-1397 form a C2H2-type 8; degenerate zinc finger; that stretch reads FICSRCYRAFTNPRSLGGHLSKR. Polar residues predominate over residues 1588–1627; the sequence is SFPNSGGPSQNFTSNSSRVSVISGPQNTRSSHLNKKGNSA. Residues 1588 to 1634 are disordered; sequence SFPNSGGPSQNFTSNSSRVSVISGPQNTRSSHLNKKGNSASKRRKKV. Residues 1827–1854 are a coiled coil; the sequence is QSEVSHKEDQIQEILEGLQKLKLENDLS. 2 consecutive C2H2-type zinc fingers follow at residues 1902–1927 and 1947–1972; these read FVCQNQGCNYSAMTKDALFKHYGKIH and FKCVVPTCTKTFTRNSNLRAHCQLVH. A disordered region spans residues 1986–2023; it reads RPYGRKSQSENVPASRSTQVKKQLAMTEENKKESQPAL. The span at 1994–2006 shows a compositional bias: polar residues; it reads SENVPASRSTQVK. Lys-2042 bears the N6-acetyllysine mark. Residues 2074–2103 form a disordered region; that stretch reads NTQTKGRKIRRHKKEKEEKKRKKPVSQSLE. Over residues 2078–2097 the composition is skewed to basic residues; it reads KGRKIRRHKKEKEEKKRKKP. C2H2-type zinc fingers lie at residues 2114-2139, 2172-2197, 2216-2241, and 2256-2281; these read YRCVHQGCFAAFTIQQNLILHYQAVH, FRCQVSDCSRIFQAITGLIQHYMKLH, FPCDQLECKSSFTTYLNYVVHLEADH, and YKCDCEGCDRIYATRSNLLRHIFNKH. 2 stretches are compositionally biased toward basic residues: residues 2285–2294 and 2312–2322; these read HKAHLIRPRR and KSKHRGTKHSR. Residues 2285-2345 are disordered; the sequence is HKAHLIRPRR…KKKNNLENKN (61 aa). A C2H2-type 15 zinc finger spans residues 2386–2410; it reads YPCMIKGCTSVVTSESNIIRHYKCH. The span at 2441–2452 shows a compositional bias: basic and acidic residues; it reads QEGAKNDVKDSD. Disordered stretches follow at residues 2441-2480, 2530-2564, and 2606-2631; these read QEGAKNDVKDSDTCVSESNDNSRTTATVSQKEVEKNEKDE, LKRVNKEKNVSQNKKRKVEKAEPASAAELSSVRKE, and QKKNTDKDHPNTGNKKGSHSNSRKNI. Polar residues predominate over residues 2453-2470; it reads TCVSESNDNSRTTATVSQ. Basic and acidic residues predominate over residues 2606 to 2615; sequence QKKNTDKDHP.

Belongs to the krueppel C2H2-type zinc-finger protein family.

The protein localises to the nucleus. May be involved in transcriptional regulation. In Homo sapiens (Human), this protein is Zinc finger protein 292 (ZNF292).